Here is a 297-residue protein sequence, read N- to C-terminus: Virulence genes transcriptional activator (297 aa).

Positions 1–61 (MDFLINKKLK…IRKNGTLIPT (61 aa)) constitute an HTH lysR-type domain. A DNA-binding region (H-T-H motif) is located at residues 21 to 40 (FSIATSVLYITRTPLSRVIS).

It belongs to the LysR transcriptional regulatory family.

It localises to the cytoplasm. Functionally, positive regulator for the plasmid-encoded virulence factors SpvA, SpvB, and SpvC. In Salmonella typhimurium (strain LT2 / SGSC1412 / ATCC 700720), this protein is Virulence genes transcriptional activator (mkaC).